The primary structure comprises 235 residues: MRLIPAVDLKSGKAVRLYEGDPARETPYGDPVEAALRFQEEGATLLHLVDLDRALGTGENREAVRRVAASLSIPFQLAGGIRSLEALQEALSLGASRAVVGTVAVKDPGLLARMLEAVGPDRLAVALDARGLEVVVSGWQEAASASALDLLRAWAEMGVRTLLYTDVRRDGTLLGLDREVVARVRAAWPHELIVGGGIASPEDLHLLQALGVDGALIGKALYEGRIRLKEAVWRS.

Asp-8 (proton acceptor) is an active-site residue. The active-site Proton donor is Asp-128.

The protein belongs to the HisA/HisF family.

The protein resides in the cytoplasm. It catalyses the reaction 1-(5-phospho-beta-D-ribosyl)-5-[(5-phospho-beta-D-ribosylamino)methylideneamino]imidazole-4-carboxamide = 5-[(5-phospho-1-deoxy-D-ribulos-1-ylimino)methylamino]-1-(5-phospho-beta-D-ribosyl)imidazole-4-carboxamide. It participates in amino-acid biosynthesis; L-histidine biosynthesis; L-histidine from 5-phospho-alpha-D-ribose 1-diphosphate: step 4/9. This Thermus thermophilus (strain ATCC BAA-163 / DSM 7039 / HB27) protein is 1-(5-phosphoribosyl)-5-[(5-phosphoribosylamino)methylideneamino] imidazole-4-carboxamide isomerase.